Consider the following 236-residue polypeptide: Orotidine 5'-phosphate decarboxylase (236 aa).

Residues aspartate 17, lysine 39, 66-75, threonine 125, arginine 186, glutamine 195, glycine 215, and arginine 216 contribute to the substrate site; that span reads DLKFHDIPNT. Lysine 68 serves as the catalytic Proton donor.

Belongs to the OMP decarboxylase family. Type 1 subfamily. Homodimer.

It catalyses the reaction orotidine 5'-phosphate + H(+) = UMP + CO2. It participates in pyrimidine metabolism; UMP biosynthesis via de novo pathway; UMP from orotate: step 2/2. Functionally, catalyzes the decarboxylation of orotidine 5'-monophosphate (OMP) to uridine 5'-monophosphate (UMP). The chain is Orotidine 5'-phosphate decarboxylase from Buchnera aphidicola subsp. Schizaphis graminum (strain Sg).